Reading from the N-terminus, the 274-residue chain is Formamidopyrimidine-DNA glycosylase (274 aa).

Proline 2 (schiff-base intermediate with DNA) is an active-site residue. The Proton donor role is filled by glutamate 3. Lysine 60 functions as the Proton donor; for beta-elimination activity in the catalytic mechanism. DNA is bound by residues histidine 93 and arginine 112. The segment at 240–274 (FVYGRKGEPCKRCGTPIEKTVVAGRGTHYCPRCQR) adopts an FPG-type zinc-finger fold. The Proton donor; for delta-elimination activity role is filled by arginine 264.

This sequence belongs to the FPG family. In terms of assembly, monomer. Zn(2+) serves as cofactor.

It catalyses the reaction Hydrolysis of DNA containing ring-opened 7-methylguanine residues, releasing 2,6-diamino-4-hydroxy-5-(N-methyl)formamidopyrimidine.. It carries out the reaction 2'-deoxyribonucleotide-(2'-deoxyribose 5'-phosphate)-2'-deoxyribonucleotide-DNA = a 3'-end 2'-deoxyribonucleotide-(2,3-dehydro-2,3-deoxyribose 5'-phosphate)-DNA + a 5'-end 5'-phospho-2'-deoxyribonucleoside-DNA + H(+). In terms of biological role, involved in base excision repair of DNA damaged by oxidation or by mutagenic agents. Acts as a DNA glycosylase that recognizes and removes damaged bases. Has a preference for oxidized purines, such as 7,8-dihydro-8-oxoguanine (8-oxoG). Has AP (apurinic/apyrimidinic) lyase activity and introduces nicks in the DNA strand. Cleaves the DNA backbone by beta-delta elimination to generate a single-strand break at the site of the removed base with both 3'- and 5'-phosphates. The protein is Formamidopyrimidine-DNA glycosylase of Geobacillus kaustophilus (strain HTA426).